A 601-amino-acid polypeptide reads, in one-letter code: Glutathione-regulated potassium-efflux system protein KefB (601 aa).

Transmembrane regions (helical) follow at residues 4–24 (SDFLLAGVLFLFAAVAAVPLA), 29–49 (IGAVLGYLLAGIAIGPWGLGF), 55–75 (EILHFSELGVVFLMFIIGLEL), 87–107 (IFGVGAAQVLLSAALLAGLLM), 115–135 (AAVVGGIGLAMSSTAMALQLM), 152–172 (VLLFQDLAVIPALALVPLLAG), 177–197 (HFDWMKIGMKVLAFVGMLIGG), 207–227 (FIAASGVREVFTAATLLLVLG), 230–250 (LFMDALGLSMALGTFIAGVLL), 268–288 (GLLLGLFFISVGMSLNLGVLY), 291–311 (LLWVVISVVVLVAVKILVLYL), 324–344 (MQFAGVLSQGGEFAFVLFSTA), and 356–376 (ALLLVTVTLSMMTTPLLMKLV). The region spanning 400–519 (KPQVIVVGFG…AGVTQFSRET (120 aa)) is the RCK N-terminal domain.

Belongs to the monovalent cation:proton antiporter 2 (CPA2) transporter (TC 2.A.37) family. KefB subfamily. In terms of assembly, interacts with the regulatory subunit KefG.

The protein localises to the cell inner membrane. Functionally, pore-forming subunit of a potassium efflux system that confers protection against electrophiles. Catalyzes K(+)/H(+) antiport. The sequence is that of Glutathione-regulated potassium-efflux system protein KefB from Shigella sonnei (strain Ss046).